The primary structure comprises 546 residues: Glucose-6-phosphate isomerase (546 aa).

Residue Glu-353 is the Proton donor of the active site. Active-site residues include His-384 and Lys-512.

This sequence belongs to the GPI family.

The protein localises to the cytoplasm. The enzyme catalyses alpha-D-glucose 6-phosphate = beta-D-fructose 6-phosphate. The protein operates within carbohydrate biosynthesis; gluconeogenesis. Its pathway is carbohydrate degradation; glycolysis; D-glyceraldehyde 3-phosphate and glycerone phosphate from D-glucose: step 2/4. In terms of biological role, catalyzes the reversible isomerization of glucose-6-phosphate to fructose-6-phosphate. The chain is Glucose-6-phosphate isomerase from Actinobacillus pleuropneumoniae serotype 5b (strain L20).